Consider the following 494-residue polypeptide: uncharacterized protein (494 aa).

Belongs to the TPP enzyme family.

This is an uncharacterized protein from Methanocaldococcus jannaschii (strain ATCC 43067 / DSM 2661 / JAL-1 / JCM 10045 / NBRC 100440) (Methanococcus jannaschii).